Here is a 435-residue protein sequence, read N- to C-terminus: F-box only protein 9 (435 aa).

Residues 1–25 (MAEAEEDCHSDAVRVGDEGHESPAE) are disordered. Residues 7–25 (DCHSDAVRVGDEGHESPAE) show a composition bias toward basic and acidic residues. Residues 82–115 (ARELFLKAVEEEQNGALYEAIKFYRRAMQLVPDI) form a TPR repeat. Serine 124 is modified (phosphoserine). The F-box domain occupies 173–224 (QTHISVLPMEVLMYIFRWVVSSDLDLRSLEQLSLVCRGFYICARDPEIWRLA).

In terms of assembly, part of the SCF (SKP1-CUL1-F-box) E3 ubiquitin-protein ligase complex SCF(FBXO9) composed of CUL1, SKP1, RBX1 and FBXO9. Interacts with TTI1 and TELO2; when TTI1 and TELO2 are phosphorylated by CK2.

It is found in the cytoplasm. The protein operates within protein modification; protein ubiquitination. Its function is as follows. Substrate recognition component of a SCF (SKP1-CUL1-F-box protein) E3 ubiquitin-protein ligase complex which mediates the ubiquitination and subsequent proteasomal degradation of target proteins and plays a role in several biological processes such as cell cycle, cell proliferation, or maintenance of chromosome stability. Ubiquitinates mTORC1-bound TTI1 and TELO2 when they are phosphorylated by CK2 following growth factor deprivation, leading to their degradation. In contrast, does not mediate ubiquitination of TTI1 and TELO2 when they are part of the mTORC2 complex. As a consequence, mTORC1 is inactivated to restrain cell growth and protein translation, while mTORC2 is the activated due to the relief of feedback inhibition by mTORC1. Plays a role in maintaining epithelial cell survival by regulating the turn-over of chromatin modulator PRMT4 through ubiquitination and degradation by the proteasomal pathway. Also regulates PPARgamma stability by facilitating PPARgamma/PPARG ubiquitination and thereby plays a role in adipocyte differentiation. In Rattus norvegicus (Rat), this protein is F-box only protein 9 (Fbxo9).